The primary structure comprises 306 residues: Ornithine carbamoyltransferase (306 aa).

Carbamoyl phosphate is bound by residues 51 to 54 (STRT), Gln-78, Arg-102, and 129 to 132 (HPVQ). L-ornithine-binding positions include Asn-159, Asp-223, and 227 to 228 (SM). Carbamoyl phosphate-binding positions include 263 to 264 (CL) and Arg-291.

This sequence belongs to the aspartate/ornithine carbamoyltransferase superfamily. OTCase family.

It is found in the cytoplasm. The catalysed reaction is carbamoyl phosphate + L-ornithine = L-citrulline + phosphate + H(+). Its pathway is amino-acid biosynthesis; L-arginine biosynthesis; L-arginine from L-ornithine and carbamoyl phosphate: step 1/3. Reversibly catalyzes the transfer of the carbamoyl group from carbamoyl phosphate (CP) to the N(epsilon) atom of ornithine (ORN) to produce L-citrulline. This is Ornithine carbamoyltransferase from Sulfurovum sp. (strain NBC37-1).